We begin with the raw amino-acid sequence, 89 residues long: Small ribosomal subunit protein uS15 (89 aa).

The protein belongs to the universal ribosomal protein uS15 family. Part of the 30S ribosomal subunit. Forms a bridge to the 50S subunit in the 70S ribosome, contacting the 23S rRNA.

In terms of biological role, one of the primary rRNA binding proteins, it binds directly to 16S rRNA where it helps nucleate assembly of the platform of the 30S subunit by binding and bridging several RNA helices of the 16S rRNA. Forms an intersubunit bridge (bridge B4) with the 23S rRNA of the 50S subunit in the ribosome. This chain is Small ribosomal subunit protein uS15, found in Salinispora arenicola (strain CNS-205).